Consider the following 468-residue polypeptide: Bifunctional protein GlmU (468 aa).

Positions 1 to 233 (MAQAGSASPL…LEEANLVNDR (233 aa)) are pyrophosphorylase. UDP-N-acetyl-alpha-D-glucosamine is bound by residues 15–18 (LAAG), Lys-29, Gln-79, and 84–85 (GT). Asp-109 is a binding site for Mg(2+). Residues Gly-146, Glu-159, Asn-174, and Asn-231 each coordinate UDP-N-acetyl-alpha-D-glucosamine. Asn-231 is a Mg(2+) binding site. Positions 234 to 254 (SQLARAEEILRRRILDAHMKE) are linker. An N-acetyltransferase region spans residues 255-468 (GVTVRDPVST…GDRRRARTEG (214 aa)). The UDP-N-acetyl-alpha-D-glucosamine site is built by Arg-336 and Lys-354. Residue His-366 is the Proton acceptor of the active site. Residues Tyr-369 and Asn-380 each coordinate UDP-N-acetyl-alpha-D-glucosamine. Acetyl-CoA is bound by residues Ala-383, 389 to 390 (NY), and Ala-426.

The protein in the N-terminal section; belongs to the N-acetylglucosamine-1-phosphate uridyltransferase family. It in the C-terminal section; belongs to the transferase hexapeptide repeat family. As to quaternary structure, homotrimer. Mg(2+) is required as a cofactor.

It is found in the cytoplasm. It catalyses the reaction alpha-D-glucosamine 1-phosphate + acetyl-CoA = N-acetyl-alpha-D-glucosamine 1-phosphate + CoA + H(+). It carries out the reaction N-acetyl-alpha-D-glucosamine 1-phosphate + UTP + H(+) = UDP-N-acetyl-alpha-D-glucosamine + diphosphate. Its pathway is nucleotide-sugar biosynthesis; UDP-N-acetyl-alpha-D-glucosamine biosynthesis; N-acetyl-alpha-D-glucosamine 1-phosphate from alpha-D-glucosamine 6-phosphate (route II): step 2/2. It participates in nucleotide-sugar biosynthesis; UDP-N-acetyl-alpha-D-glucosamine biosynthesis; UDP-N-acetyl-alpha-D-glucosamine from N-acetyl-alpha-D-glucosamine 1-phosphate: step 1/1. The protein operates within bacterial outer membrane biogenesis; LPS lipid A biosynthesis. Catalyzes the last two sequential reactions in the de novo biosynthetic pathway for UDP-N-acetylglucosamine (UDP-GlcNAc). The C-terminal domain catalyzes the transfer of acetyl group from acetyl coenzyme A to glucosamine-1-phosphate (GlcN-1-P) to produce N-acetylglucosamine-1-phosphate (GlcNAc-1-P), which is converted into UDP-GlcNAc by the transfer of uridine 5-monophosphate (from uridine 5-triphosphate), a reaction catalyzed by the N-terminal domain. This chain is Bifunctional protein GlmU, found in Rubrobacter xylanophilus (strain DSM 9941 / JCM 11954 / NBRC 16129 / PRD-1).